The sequence spans 592 residues: Beta-fructofuranosidase, insoluble isoenzyme 1 (592 aa).

Positions M1–A39 are cleaved as a signal peptide. Residues F40–Q48 constitute a propeptide that is removed on maturation. D74 is a catalytic residue. N170 carries an N-linked (GlcNAc...) (complex) asparagine glycan. Residue N195 is glycosylated (N-linked (GlcNAc...) asparagine). An N-linked (GlcNAc...) (complex) asparagine glycan is attached at N311. An N-linked (GlcNAc...) (high mannose) asparagine glycan is attached at N348. N570 is a glycosylation site (N-linked (GlcNAc...) asparagine).

It belongs to the glycosyl hydrolase 32 family. In terms of tissue distribution, in leaves and roots of young plants.

The protein resides in the secreted. Its subcellular location is the cell wall. The enzyme catalyses Hydrolysis of terminal non-reducing beta-D-fructofuranoside residues in beta-D-fructofuranosides.. May play an important role in phloem unloading and in stress response. The chain is Beta-fructofuranosidase, insoluble isoenzyme 1 (INV1) from Daucus carota (Wild carrot).